The chain runs to 383 residues: Succinyl-diaminopimelate desuccinylase (383 aa).

Histidine 73 contributes to the Zn(2+) binding site. Aspartate 75 is a catalytic residue. Aspartate 107 contacts Zn(2+). Catalysis depends on glutamate 141, which acts as the Proton acceptor. Residues glutamate 142, glutamate 170, and histidine 356 each contribute to the Zn(2+) site.

This sequence belongs to the peptidase M20A family. DapE subfamily. Homodimer. Zn(2+) serves as cofactor. It depends on Co(2+) as a cofactor.

The catalysed reaction is N-succinyl-(2S,6S)-2,6-diaminopimelate + H2O = (2S,6S)-2,6-diaminopimelate + succinate. It functions in the pathway amino-acid biosynthesis; L-lysine biosynthesis via DAP pathway; LL-2,6-diaminopimelate from (S)-tetrahydrodipicolinate (succinylase route): step 3/3. In terms of biological role, catalyzes the hydrolysis of N-succinyl-L,L-diaminopimelic acid (SDAP), forming succinate and LL-2,6-diaminopimelate (DAP), an intermediate involved in the bacterial biosynthesis of lysine and meso-diaminopimelic acid, an essential component of bacterial cell walls. The sequence is that of Succinyl-diaminopimelate desuccinylase from Pseudomonas entomophila (strain L48).